A 335-amino-acid polypeptide reads, in one-letter code: Phosphate acyltransferase (335 aa).

The protein belongs to the PlsX family. Homodimer. Probably interacts with PlsY.

Its subcellular location is the cytoplasm. It carries out the reaction a fatty acyl-[ACP] + phosphate = an acyl phosphate + holo-[ACP]. The protein operates within lipid metabolism; phospholipid metabolism. Functionally, catalyzes the reversible formation of acyl-phosphate (acyl-PO(4)) from acyl-[acyl-carrier-protein] (acyl-ACP). This enzyme utilizes acyl-ACP as fatty acyl donor, but not acyl-CoA. This is Phosphate acyltransferase from Desulforudis audaxviator (strain MP104C).